The primary structure comprises 526 residues: Histidine ammonia-lyase (526 aa).

Positions 143–145 (ASG) form a cross-link, 5-imidazolinone (Ala-Gly). Position 144 is a 2,3-didehydroalanine (Ser) (Ser144).

The protein belongs to the PAL/histidase family. In terms of processing, contains an active site 4-methylidene-imidazol-5-one (MIO), which is formed autocatalytically by cyclization and dehydration of residues Ala-Ser-Gly.

It localises to the cytoplasm. The enzyme catalyses L-histidine = trans-urocanate + NH4(+). It participates in amino-acid degradation; L-histidine degradation into L-glutamate; N-formimidoyl-L-glutamate from L-histidine: step 1/3. The polypeptide is Histidine ammonia-lyase (Aromatoleum aromaticum (strain DSM 19018 / LMG 30748 / EbN1) (Azoarcus sp. (strain EbN1))).